An 88-amino-acid chain; its full sequence is Phosphocarrier protein HPr (88 aa).

The 88-residue stretch at 1-88 (MEQASFVVID…EVLKKEGLAE (88 aa)) folds into the HPr domain. His-15 (pros-phosphohistidine intermediate) is an active-site residue. Ser-46 carries the phosphoserine; by HPrK/P modification.

The protein belongs to the HPr family.

The protein resides in the cytoplasm. With respect to regulation, phosphorylation on Ser-46 inhibits the phosphoryl transfer from enzyme I to HPr. General (non sugar-specific) component of the phosphoenolpyruvate-dependent sugar phosphotransferase system (sugar PTS). This major carbohydrate active-transport system catalyzes the phosphorylation of incoming sugar substrates concomitantly with their translocation across the cell membrane. The phosphoryl group from phosphoenolpyruvate (PEP) is transferred to the phosphoryl carrier protein HPr by enzyme I. Phospho-HPr then transfers it to the PTS EIIA domain. Functionally, P-Ser-HPr interacts with the catabolite control protein A (CcpA), forming a complex that binds to DNA at the catabolite response elements cre, operator sites preceding a large number of catabolite-regulated genes. Thus, P-Ser-HPr is a corepressor in carbon catabolite repression (CCR), a mechanism that allows bacteria to coordinate and optimize the utilization of available carbon sources. P-Ser-HPr also plays a role in inducer exclusion, in which it probably interacts with several non-PTS permeases and inhibits their transport activity. The sequence is that of Phosphocarrier protein HPr (ptsH) from Listeria monocytogenes serovar 1/2a (strain ATCC BAA-679 / EGD-e).